A 547-amino-acid polypeptide reads, in one-letter code: 2-succinyl-5-enolpyruvyl-6-hydroxy-3-cyclohexene-1-carboxylate synthase (547 aa).

It belongs to the TPP enzyme family. MenD subfamily. Homodimer. It depends on Mg(2+) as a cofactor. Mn(2+) is required as a cofactor. The cofactor is thiamine diphosphate.

The catalysed reaction is isochorismate + 2-oxoglutarate + H(+) = 5-enolpyruvoyl-6-hydroxy-2-succinyl-cyclohex-3-ene-1-carboxylate + CO2. It functions in the pathway quinol/quinone metabolism; 1,4-dihydroxy-2-naphthoate biosynthesis; 1,4-dihydroxy-2-naphthoate from chorismate: step 2/7. Its pathway is quinol/quinone metabolism; menaquinone biosynthesis. Functionally, catalyzes the thiamine diphosphate-dependent decarboxylation of 2-oxoglutarate and the subsequent addition of the resulting succinic semialdehyde-thiamine pyrophosphate anion to isochorismate to yield 2-succinyl-5-enolpyruvyl-6-hydroxy-3-cyclohexene-1-carboxylate (SEPHCHC). This chain is 2-succinyl-5-enolpyruvyl-6-hydroxy-3-cyclohexene-1-carboxylate synthase, found in Mycobacterium sp. (strain JLS).